Consider the following 90-residue polypeptide: uncharacterized protein (90 aa).

The segment at Gly25–Asp90 is disordered. Composition is skewed to polar residues over residues Asn30–Val54 and Asn65–Asn79.

This is an uncharacterized protein from Bacillus subtilis (strain 168).